The following is a 341-amino-acid chain: Retinol dehydrogenase 10 (341 aa).

The helical; Signal-anchor transmembrane segment at I3–A23 threads the bilayer. L40 to V64 serves as a coordination point for NADP(+). S197 lines the substrate pocket. Y210 serves as the catalytic Proton acceptor.

This sequence belongs to the short-chain dehydrogenases/reductases (SDR) family. Detected in retina, entire eyecups and in liver (at protein level).

It localises to the microsome membrane. The protein resides in the endoplasmic reticulum membrane. The catalysed reaction is all-trans-retinol + NADP(+) = all-trans-retinal + NADPH + H(+). It participates in cofactor metabolism; retinol metabolism. Functionally, retinol dehydrogenase with a clear preference for NADP. Converts all-trans-retinol to all-trans-retinal. This chain is Retinol dehydrogenase 10 (Rdh10), found in Rattus norvegicus (Rat).